The chain runs to 534 residues: Prolyl 4-hydroxylase subunit alpha-1 (534 aa).

An N-terminal signal peptide occupies residues 1–17 (MIWYILIIGILLPQSLA). N-linked (GlcNAc...) asparagine glycosylation occurs at N113. Residues 205–238 (VSVLDYLSYAVYQQGDLDKALLLTKKLLELDPEH) form a TPR repeat. An N-linked (GlcNAc...) asparagine glycan is attached at N259. In terms of domain architecture, Fe2OG dioxygenase spans 411-519 (TAEELQVANY…KWVSNKWLHE (109 aa)). Positions 429, 431, and 500 each coordinate Fe cation. K510 contacts 2-oxoglutarate.

It belongs to the P4HA family. Heterotetramer of two alpha-1 chains and two beta chains (P4HB)(the beta chain is the multi-functional PDI), where P4HB plays the role of a structural subunit; this tetramer catalyzes the formation of 4-hydroxyproline in collagen. Requires Fe(2+) as cofactor. The cofactor is L-ascorbate. As to expression, expressed in the heart, liver, skeletal muscle, kidney, placenta, lung and pancreas.

Its subcellular location is the endoplasmic reticulum lumen. The enzyme catalyses L-prolyl-[collagen] + 2-oxoglutarate + O2 = trans-4-hydroxy-L-prolyl-[collagen] + succinate + CO2. Its activity is regulated as follows. Inhibited by poly(L-proline). Catalyzes the post-translational formation of 4-hydroxyproline in -Xaa-Pro-Gly- sequences in collagens and other proteins. The chain is Prolyl 4-hydroxylase subunit alpha-1 (P4HA1) from Homo sapiens (Human).